Reading from the N-terminus, the 392-residue chain is MITLITEQLQKQTLDELKCTRFSISLPLPDHADISNCGNPFQLVSEGASWRGLPHCSCAEFQDSLNFSYHPSGLSLHLRPPSRGSSPKEQPLSQVLRPEPPDPEKLPVPPAPPSKRHCRSLSVPVDLSRWQPVWRPAPSKLWTPIKHRGSGGGGGPQVPHQSPPKRVSSLRFLQAPSASSQCAPAHRPYSPPFFSLALAQDSSRPCATSPQSGSWESDAESLSPCPPQRRFSLSPSLGPQASRFLPSARSSPASSPELPWRPRGLRNLPRSRSQPCDLDARKTGVKRRHEEDPRRLRPSLDFDKMNQKPYSGGLCLQETAREGSSISPPWFMACSPPPLSASCSPTGGSSQVLSESEEEEEGAVRWGRQALSKRTLCQQDFGDLDLNLIEEN.

M1 carries the N-acetylmethionine modification. Positions 77–120 are disordered; that stretch reads HLRPPSRGSSPKEQPLSQVLRPEPPDPEKLPVPPAPPSKRHCRS. Positions 83–93 are enriched in polar residues; the sequence is RGSSPKEQPLS. A phosphoserine mark is found at S122 and S162. Disordered stretches follow at residues 141-167, 203-303, and 340-364; these read LWTP…PKRV, SRPC…LDFD, and SASC…EGAV. Residues 203 to 215 are compositionally biased toward polar residues; that stretch reads SRPCATSPQSGSW. Residues S232, S234, S255, S273, and S299 each carry the phosphoserine modification. Over residues 241-256 the composition is skewed to low complexity; the sequence is ASRFLPSARSSPASSP. Over residues 278–303 the composition is skewed to basic and acidic residues; it reads LDARKTGVKRRHEEDPRRLRPSLDFD.

It belongs to the FAM53 family.

The protein is Protein FAM53C of Pongo abelii (Sumatran orangutan).